A 220-amino-acid polypeptide reads, in one-letter code: Phosphoenolpyruvate guanylyltransferase (220 aa).

Phosphoenolpyruvate contacts are provided by T154, G169, and S172.

The protein belongs to the CofC family.

The catalysed reaction is phosphoenolpyruvate + GTP + H(+) = enolpyruvoyl-2-diphospho-5'-guanosine + diphosphate. Its pathway is cofactor biosynthesis; coenzyme F420 biosynthesis. Functionally, guanylyltransferase that catalyzes the activation of phosphoenolpyruvate (PEP) as enolpyruvoyl-2-diphospho-5'-guanosine, via the condensation of PEP with GTP. It is involved in the biosynthesis of coenzyme F420, a hydride carrier cofactor. This is Phosphoenolpyruvate guanylyltransferase from Mycolicibacterium paratuberculosis (strain ATCC BAA-968 / K-10) (Mycobacterium paratuberculosis).